Reading from the N-terminus, the 785-residue chain is DNA ligase (785 aa).

NAD(+) is bound by residues D32–D36, S81–L82, and E121. K123 acts as the N6-AMP-lysine intermediate in catalysis. NAD(+) is bound by residues R144, E181, K297, and K321. Positions 415, 418, 445, and 451 each coordinate Zn(2+). One can recognise a BRCT domain in the interval V702–A785.

This sequence belongs to the NAD-dependent DNA ligase family. LigA subfamily. Requires Mg(2+) as cofactor. Mn(2+) is required as a cofactor.

The catalysed reaction is NAD(+) + (deoxyribonucleotide)n-3'-hydroxyl + 5'-phospho-(deoxyribonucleotide)m = (deoxyribonucleotide)n+m + AMP + beta-nicotinamide D-nucleotide.. In terms of biological role, DNA ligase that catalyzes the formation of phosphodiester linkages between 5'-phosphoryl and 3'-hydroxyl groups in double-stranded DNA using NAD as a coenzyme and as the energy source for the reaction. It is essential for DNA replication and repair of damaged DNA. In Pseudomonas fluorescens (strain Pf0-1), this protein is DNA ligase.